The primary structure comprises 425 residues: Rho GTPase-activating protein 8 (425 aa).

One can recognise a CRAL-TRIO domain in the interval Pro-13 to Gln-168. Positions Asn-169–Gln-192 are disordered. Pro residues predominate over residues Gln-174–Pro-189. Residues Val-195–Phe-381 form the Rho-GAP domain.

As to expression, highly expressed in skeletal muscle, lung and testis, and at lower levels in kidney, stomach and colon. Not detected in heart, liver, spleen, breast, brain, neonatal head or pancreas.

Functionally, GTPase activator for the Rho-type GTPases by converting them to an inactive GDP-bound state. This is Rho GTPase-activating protein 8 (Arhgap8) from Mus musculus (Mouse).